A 262-amino-acid chain; its full sequence is Nurim (262 aa).

Topologically, residues 1–4 (MAPA) are nuclear. The helical transmembrane segment at 5-28 (LLLVPAALASFVLAFGTGVEFVRF) threads the bilayer. The Perinuclear space portion of the chain corresponds to 29–58 (TSLRPLLGGIPESGGPDARHGWLAALQDRS). Residues 59–80 (ILASLAWDLCLLLLFVVQHSLM) traverse the membrane as a helical segment. Residues 81-97 (ATEAVKAWTSRYFGVLQ) are Nuclear-facing. A helical transmembrane segment spans residues 98 to 114 (RSLYVACTALALQLVMR). Topologically, residues 115–133 (YWEATPRGPVLWEARAEPW) are perinuclear space. A helical transmembrane segment spans residues 134–164 (ATWVPLLCFVLHVVSWLLIFSILLVFDYAEL). The Nuclear segment spans residues 165–191 (MGLKQVYYHVLGLGEPLSLKSPRALRL). The chain crosses the membrane as a helical span at residues 192 to 210 (FSHLRHPVCVELLTVLWVV). Residues 211 to 216 (PTLGTD) lie on the Perinuclear space side of the membrane. Residues 217-234 (RLLLALLFTLYLGLAHGL) traverse the membrane as a helical segment. Over 235 to 262 (DQQDLRYLRSQLQRKLQLLSRPQDGEAE) the chain is Nuclear.

The protein belongs to the nurim family.

Its subcellular location is the nucleus inner membrane. This is Nurim (Nrm) from Rattus norvegicus (Rat).